A 98-amino-acid chain; its full sequence is Integration host factor subunit alpha (98 aa).

The interval 54–74 is disordered; the sequence is LRDKSSRPGRNPKTGESVPVS.

It belongs to the bacterial histone-like protein family. As to quaternary structure, heterodimer of an alpha and a beta chain.

Functionally, this protein is one of the two subunits of integration host factor, a specific DNA-binding protein that functions in genetic recombination as well as in transcriptional and translational control. In Pasteurella multocida (strain Pm70), this protein is Integration host factor subunit alpha (ihfA).